A 514-amino-acid chain; its full sequence is 1-pyrroline-5-carboxylate dehydrogenase (514 aa).

Residues Glu286 and Cys320 contribute to the active site.

It belongs to the aldehyde dehydrogenase family. RocA subfamily.

It carries out the reaction L-glutamate 5-semialdehyde + NAD(+) + H2O = L-glutamate + NADH + 2 H(+). Its pathway is amino-acid degradation; L-proline degradation into L-glutamate; L-glutamate from L-proline: step 2/2. The chain is 1-pyrroline-5-carboxylate dehydrogenase from Staphylococcus epidermidis (strain ATCC 12228 / FDA PCI 1200).